Here is a 385-residue protein sequence, read N- to C-terminus: Lipid-A-disaccharide synthase (385 aa).

Belongs to the LpxB family.

It carries out the reaction a lipid X + a UDP-2-N,3-O-bis[(3R)-3-hydroxyacyl]-alpha-D-glucosamine = a lipid A disaccharide + UDP + H(+). The protein operates within bacterial outer membrane biogenesis; LPS lipid A biosynthesis. Its function is as follows. Condensation of UDP-2,3-diacylglucosamine and 2,3-diacylglucosamine-1-phosphate to form lipid A disaccharide, a precursor of lipid A, a phosphorylated glycolipid that anchors the lipopolysaccharide to the outer membrane of the cell. In Pseudoalteromonas translucida (strain TAC 125), this protein is Lipid-A-disaccharide synthase.